Here is a 236-residue protein sequence, read N- to C-terminus: 2-C-methyl-D-erythritol 4-phosphate cytidylyltransferase (236 aa).

The protein belongs to the IspD/TarI cytidylyltransferase family. IspD subfamily.

It catalyses the reaction 2-C-methyl-D-erythritol 4-phosphate + CTP + H(+) = 4-CDP-2-C-methyl-D-erythritol + diphosphate. It participates in isoprenoid biosynthesis; isopentenyl diphosphate biosynthesis via DXP pathway; isopentenyl diphosphate from 1-deoxy-D-xylulose 5-phosphate: step 2/6. Functionally, catalyzes the formation of 4-diphosphocytidyl-2-C-methyl-D-erythritol from CTP and 2-C-methyl-D-erythritol 4-phosphate (MEP). In Burkholderia vietnamiensis (strain G4 / LMG 22486) (Burkholderia cepacia (strain R1808)), this protein is 2-C-methyl-D-erythritol 4-phosphate cytidylyltransferase.